Consider the following 437-residue polypeptide: MAAQAAPAEELSKLSVDETKPAPAAANGNDSDAESGDEEAEEGAAAPAAGAAKKKKKRKPKKKKKAPTSQSEPPRVLVSQLFPNNQYPKGEEVEYVNDNLNRVTNEEKRHLDNLNQEFLTDYRHAAEVHRQVRQWAQKSIKPGQTLTEIAENIEDSVRALTGHSGLEEGDALIAGMGFPTGLSINHCAAHYTPNAGNKMVLQEDDVMKVDFGVHVNGRIVDSAFTVAFNPRYDPLLEAVKAATNAGIKEAGIDVRVGDIGAAIQEVMESYEVEINGQMLPVKSIRNLNGHTINHYSIHGTKSVPIVKSNDQTKMEEGDVFAIETFGSTGNGYVHEEGEVSHYAKRGDAAKVDLRLSSAKSLLNVITKNFGTLPFCRRYIDRLGQDKYLLGLNNLVSQGIVEAYPPLVDKKGSYTAQYEHTILLRPTVKEVISRGDDF.

A disordered region spans residues 1-90 (MAAQAAPAEE…LFPNNQYPKG (90 aa)). The span at 10 to 20 (ELSKLSVDETK) shows a compositional bias: basic and acidic residues. Residues 31 to 42 (SDAESGDEEAEE) show a composition bias toward acidic residues. Residues 52–66 (AKKKKKRKPKKKKKA) are compositionally biased toward basic residues. His-190 lines the substrate pocket. Positions 210, 221, and 290 each coordinate a divalent metal cation. His-298 is a substrate binding site. A divalent metal cation contacts are provided by Glu-323 and Glu-418.

The protein belongs to the peptidase M24A family. Methionine aminopeptidase eukaryotic type 2 subfamily. It depends on Co(2+) as a cofactor. Requires Zn(2+) as cofactor. Mn(2+) is required as a cofactor. Fe(2+) serves as cofactor.

Its subcellular location is the cytoplasm. It catalyses the reaction Release of N-terminal amino acids, preferentially methionine, from peptides and arylamides.. Cotranslationally removes the N-terminal methionine from nascent proteins. The N-terminal methionine is often cleaved when the second residue in the primary sequence is small and uncharged (Met-Ala-, Cys, Gly, Pro, Ser, Thr, or Val). The sequence is that of Methionine aminopeptidase 2 from Neurospora crassa (strain ATCC 24698 / 74-OR23-1A / CBS 708.71 / DSM 1257 / FGSC 987).